The chain runs to 513 residues: uncharacterized protein (513 aa).

In terms of domain architecture, CYTH spans 11-219; sequence HLEVERKFDV…SKLARVLGAT (209 aa). In terms of domain architecture, CHAD spans 228 to 506; it reads PQPPADPVHR…LEAALRKLDK (279 aa).

This is an uncharacterized protein from Mycobacterium tuberculosis (strain CDC 1551 / Oshkosh).